A 119-amino-acid polypeptide reads, in one-letter code: Large ribosomal subunit protein bL20 (119 aa).

It belongs to the bacterial ribosomal protein bL20 family.

In terms of biological role, binds directly to 23S ribosomal RNA and is necessary for the in vitro assembly process of the 50S ribosomal subunit. It is not involved in the protein synthesizing functions of that subunit. The protein is Large ribosomal subunit protein bL20 of Shewanella frigidimarina (strain NCIMB 400).